The sequence spans 126 residues: Protein MGF 100-1R (126 aa).

It belongs to the asfivirus MGF 100 family.

Functionally, plays a role in virus cell tropism, and may be required for efficient virus replication in macrophages. In Ornithodoros (relapsing fever ticks), this protein is Protein MGF 100-1R.